Consider the following 356-residue polypeptide: Glutamine synthetase PR-1 (356 aa).

The GS beta-grasp domain occupies 19–99 (VIAEYIWIGG…VICDAYTPAG (81 aa)). Residues 41-64 (PGPVKNPSELPKWNYDGSSTGQAP) form a disordered region. A GS catalytic domain is found at 106 to 356 (KRHNAAKIFS…IADTTILWKP (251 aa)).

The protein belongs to the glutamine synthetase family. As to quaternary structure, homooctamer. In terms of tissue distribution, roots.

It is found in the cytoplasm. It carries out the reaction L-glutamate + NH4(+) + ATP = L-glutamine + ADP + phosphate + H(+). The sequence is that of Glutamine synthetase PR-1 from Phaseolus vulgaris (Kidney bean).